The chain runs to 259 residues: Global transcriptional regulator CodY (259 aa).

Residues 1–155 (MDLLSRARKI…GATVVGMEIL (155 aa)) are GAF domain. The segment at residues 203–222 (ASKIADRVGITRSVIVNALR) is a DNA-binding region (H-T-H motif). At serine 215 the chain carries Phosphoserine.

Belongs to the CodY family.

The protein localises to the cytoplasm. Functionally, DNA-binding global transcriptional regulator which is involved in the adaptive response to starvation and acts by directly or indirectly controlling the expression of numerous genes in response to nutrient availability. During rapid exponential growth, CodY is highly active and represses genes whose products allow adaptation to nutrient depletion. The chain is Global transcriptional regulator CodY from Oceanobacillus iheyensis (strain DSM 14371 / CIP 107618 / JCM 11309 / KCTC 3954 / HTE831).